The chain runs to 319 residues: Annexin A4 (319 aa).

A Phosphothreonine modification is found at Thr-7. Residue Ser-12 is modified to Phosphoserine. 4 Annexin repeats span residues 14–85 (FNAT…GMMT), 86–157 (PTVL…SLTA), 169–241 (ALVR…AIVK), and 245–316 (NKPA…ILCG). N6-acetyllysine is present on residues Lys-213, Lys-293, and Lys-300.

This sequence belongs to the annexin family.

The protein localises to the zymogen granule membrane. Calcium/phospholipid-binding protein which promotes membrane fusion and is involved in exocytosis. The sequence is that of Annexin A4 (Anxa4) from Rattus norvegicus (Rat).